The chain runs to 925 residues: Serine/threonine-protein kinase SIK2 (925 aa).

A Protein kinase domain is found at 20 to 271 (YDIEGTLGKG…IAQIKEHKWM (252 aa)). At T25 the chain carries Phosphothreonine. Residues 26 to 34 (LGKGNFAVV) and K49 contribute to the ATP site. N6-acetyllysine; by EP300 is present on K53. The active-site Proton acceptor is the D142. T175 is modified (phosphothreonine). In terms of domain architecture, UBA spans 295–335 (EFNEQVLRLMHSLGIDQQKTIESLQNKSYNHFAAIYFLLVE). S534 carries the phosphoserine modification. Residues 564–586 (ALSSQKREVHNRSPVSFREGRRA) are disordered. The residue at position 587 (S587) is a Phosphoserine. Disordered regions lie at residues 630 to 674 (PNLA…PRQS), 742 to 776 (SSYPQPSQQLPLPRQETPPPSQQAPPFSLTQPLSP), and 800 to 895 (QPLP…SSYD). Low complexity-rich tracts occupy residues 648 to 659 (QEEVSQQQESVS) and 742 to 756 (SSYPQPSQQLPLPRQ). Residues 765 to 774 (APPFSLTQPL) are compositionally biased toward polar residues. The segment covering 808–820 (PRAAPLPTQLQQQ) has biased composition (low complexity). Over residues 821–833 (QPPPPPPPPPPRQ) the composition is skewed to pro residues.

It belongs to the protein kinase superfamily. CAMK Ser/Thr protein kinase family. SNF1 subfamily. Interacts with and phosphorylates TORC2/CRTC2. The cofactor is Mg(2+). Post-translationally, phosphorylated at Thr-175 by STK11/LKB1 in complex with STE20-related adapter-alpha (STRADA) pseudo kinase and CAB39. Phosphorylated at Thr-484 in response to insulin in adipocytes. Acetylation at Lys-53 inhibits kinase activity. Deacetylated by HDAC6.

The protein resides in the cytoplasm. It localises to the endoplasmic reticulum membrane. It catalyses the reaction L-seryl-[protein] + ATP = O-phospho-L-seryl-[protein] + ADP + H(+). It carries out the reaction L-threonyl-[protein] + ATP = O-phospho-L-threonyl-[protein] + ADP + H(+). Activated by phosphorylation on Thr-175. In terms of biological role, serine/threonine-protein kinase that plays a role in many biological processes such as fatty acid oxidation, autophagy, immune response or glucose metabolism. Phosphorylates 'Ser-794' of IRS1 in insulin-stimulated adipocytes, potentially modulating the efficiency of insulin signal transduction. Inhibits CREB activity by phosphorylating and repressing TORCs, the CREB-specific coactivators. Phosphorylates EP300 and thus inhibits its histone acetyltransferase activity. In turn, regulates the DNA-binding ability of several transcription factors such as PPARA or MLXIPL. Also plays a role in thymic T-cell development. This Pongo abelii (Sumatran orangutan) protein is Serine/threonine-protein kinase SIK2 (SIK2).